The chain runs to 330 residues: Glucosyltransferase 3 (330 aa).

A UDP-binding site is contributed by T16. Residues M106 to F111 are substrate protein-binding loop. UDP is bound by residues R179, Y211–D214, and S244–S249.

It belongs to the Gtf3 glucosyltransferase family. Homotetramer; a dimer of dimers. It depends on In vitro glycosyltransferase activity is metal-independent. as a cofactor.

It participates in protein modification; protein glycosylation. In terms of biological role, required for polymorphic O-glycosylation of the serine-rich repeat protein Fap1. Catalyzes the second step in glycosylation of the serine-rich repeat protein in this bacteria. Transfers glucose from UDP-glucose to the terminal GlcNAc moiety of 3-O-(N-acetyl-alpha-D-glucosaminyl)-L-seryl-[protein] which results from the first glycosylation step of Fap1; does not use other sugar nucleotides as substrates. The polypeptide is Glucosyltransferase 3 (Streptococcus parasanguinis).